The sequence spans 291 residues: 4-diphosphocytidyl-2-C-methyl-D-erythritol kinase (291 aa).

Lysine 10 is an active-site residue. 94-104 (PVSAGLAGGSS) lines the ATP pocket. Aspartate 136 is an active-site residue.

Belongs to the GHMP kinase family. IspE subfamily.

It catalyses the reaction 4-CDP-2-C-methyl-D-erythritol + ATP = 4-CDP-2-C-methyl-D-erythritol 2-phosphate + ADP + H(+). It participates in isoprenoid biosynthesis; isopentenyl diphosphate biosynthesis via DXP pathway; isopentenyl diphosphate from 1-deoxy-D-xylulose 5-phosphate: step 3/6. In terms of biological role, catalyzes the phosphorylation of the position 2 hydroxy group of 4-diphosphocytidyl-2C-methyl-D-erythritol. The chain is 4-diphosphocytidyl-2-C-methyl-D-erythritol kinase from Listeria innocua serovar 6a (strain ATCC BAA-680 / CLIP 11262).